Reading from the N-terminus, the 308-residue chain is Methionyl-tRNA formyltransferase (308 aa).

Residue 110–113 coordinates (6S)-5,6,7,8-tetrahydrofolate; the sequence is SLLP.

It belongs to the Fmt family.

It carries out the reaction L-methionyl-tRNA(fMet) + (6R)-10-formyltetrahydrofolate = N-formyl-L-methionyl-tRNA(fMet) + (6S)-5,6,7,8-tetrahydrofolate + H(+). Its function is as follows. Attaches a formyl group to the free amino group of methionyl-tRNA(fMet). The formyl group appears to play a dual role in the initiator identity of N-formylmethionyl-tRNA by promoting its recognition by IF2 and preventing the misappropriation of this tRNA by the elongation apparatus. This Neisseria meningitidis serogroup B (strain ATCC BAA-335 / MC58) protein is Methionyl-tRNA formyltransferase.